A 262-amino-acid polypeptide reads, in one-letter code: tRNA pseudouridine synthase A (262 aa).

Asp-51 functions as the Nucleophile in the catalytic mechanism. Tyr-109 contacts substrate.

Belongs to the tRNA pseudouridine synthase TruA family. As to quaternary structure, homodimer.

It carries out the reaction uridine(38/39/40) in tRNA = pseudouridine(38/39/40) in tRNA. Functionally, formation of pseudouridine at positions 38, 39 and 40 in the anticodon stem and loop of transfer RNAs. The protein is tRNA pseudouridine synthase A of Legionella pneumophila (strain Lens).